The primary structure comprises 138 residues: Large ribosomal subunit protein bL19 (138 aa).

Belongs to the bacterial ribosomal protein bL19 family.

This protein is located at the 30S-50S ribosomal subunit interface and may play a role in the structure and function of the aminoacyl-tRNA binding site. The protein is Large ribosomal subunit protein bL19 of Rickettsia africae (strain ESF-5).